Consider the following 175-residue polypeptide: Transcription factor HES-3 (175 aa).

Residues M1 to L49 form the bHLH domain. The Orange domain occupies Y65–R98. A compositionally biased stretch (low complexity) spans P124–L145. The tract at residues P124–W175 is disordered. The short motif at W172–W175 is the WRPW motif element.

As to quaternary structure, transcription repression requires formation of a complex with a corepressor protein of the Groucho/TLE family. Expressed exclusively in Purkinje cells.

Its subcellular location is the nucleus. In terms of biological role, transcriptional repressor of genes that require a bHLH protein for their transcription. The protein is Transcription factor HES-3 (Hes3) of Rattus norvegicus (Rat).